The primary structure comprises 882 residues: Cadherin-1 (882 aa).

An N-terminal signal peptide occupies residues 1–22; the sequence is MGPWSRSLSALLLLLQVSSWLC. Positions 23-154 are excised as a propeptide; sequence QEPEPCHPGF…SSSGLRRRKR (132 aa). The N-linked (GlcNAc...) asparagine glycan is linked to asparagine 144. Cadherin domains follow at residues 155-262, 263-375, 376-486, 487-593, and 594-697; these read DWVI…KPEF, TQEV…PPVF, NPTT…APIF, VPPE…DNAP, and IPEP…VCKK. At 155–709 the chain is on the extracellular side; sequence DWVIPPISCP…PIEAGLQIPA (555 aa). Aspartate 257 serves as a coordination point for Ca(2+). A glycan (O-linked (Man...) serine) is linked at serine 280. The O-linked (Man...) threonine glycan is linked to threonine 285. Aspartate 288 contributes to the Ca(2+) binding site. Residues threonine 358, threonine 470, threonine 472, and threonine 509 are each glycosylated (O-linked (Man...) threonine). A glycan (N-linked (GlcNAc...) asparagine) is linked at asparagine 558. 3 O-linked (Man...) threonine glycosylation sites follow: threonine 576, threonine 578, and threonine 580. Residue asparagine 637 is glycosylated (N-linked (GlcNAc...) asparagine). A helical membrane pass occupies residues 710-730; sequence ILGILGGILALLILILLLLLF. At 731 to 882 the chain is on the cytoplasmic side; that stretch reads LRRRAVVKEP…ADMYGGGEDD (152 aa). The disordered stretch occupies residues 747 to 767; it reads DTRDNVYYYDEEGGGEEDQDF. Residues tyrosine 753, tyrosine 754, and tyrosine 755 each carry the phosphotyrosine; by SRC modification. The span at 755–767 shows a compositional bias: acidic residues; sequence YDEEGGGEEDQDF. The tract at residues 758–769 is required for binding CTNND1 and PSEN1; it reads EGGGEEDQDFDL. Residues serine 770, serine 793, serine 838, serine 840, and serine 846 each carry the phosphoserine modification. The required for binding alpha, beta and gamma catenins stretch occupies residues 811–882; that stretch reads IDENLKAADT…ADMYGGGEDD (72 aa).

As to quaternary structure, homodimer; disulfide-linked. Component of an E-cadherin/ catenin adhesion complex composed of at least E-cadherin/CDH1, beta-catenin/CTNNB1 or gamma-catenin/JUP, and potentially alpha-catenin/CTNNA1; the complex is located to adherens junctions. Found in a complex composed of CDH1, RAP1A and PKP3; PKP3 acts as a scaffold protein within the complex, the complex is required for CDH1 localization to mature desmosome cell junctions. Interacts with the TRPV4 and CTNNB1 complex. Interacts with CTNND1. The stable association of CTNNA1 is controversial as CTNNA1 was shown not to bind to F-actin when assembled in the complex. Alternatively, the CTNNA1-containing complex may be linked to F-actin by other proteins such as LIMA1. Interaction with PSEN1, cleaves CDH1 resulting in the disassociation of cadherin-based adherens junctions (CAJs). Interacts with AJAP1 and DLGAP5. Interacts with TBC1D2. Interacts with LIMA1. Interacts with CAV1. Interacts with PIP5K1C. Interacts with RAB8B. Interacts with DDR1; this stabilizes CDH1 at the cell surface and inhibits its internalization. Interacts with RAPGEF2. Interacts with KLRG1. Forms a ternary complex composed of ADAM10, CADH1 and EPHA4; within the complex, CADH1 is cleaved by ADAM10 which disrupts adherens junctions. Interacts with SPEF1. Interacts with CTNNB1 and PKP2. Interacts with AMOTL2; the interaction may facilitate binding of radial actin fibers to cell junction complexes. Interacts with DSG3; the interaction is required for CDH1 localization to developing adherens junctions. Post-translationally, during apoptosis or with calcium influx, cleaved by a membrane-bound metalloproteinase (ADAM10), PS1/gamma-secretase and caspase-3. Processing by the metalloproteinase, induced by calcium influx, causes disruption of cell-cell adhesion and the subsequent release of beta-catenin into the cytoplasm. The residual membrane-tethered cleavage product is rapidly degraded via an intracellular proteolytic pathway. Cleavage by caspase-3 releases the cytoplasmic tail resulting in disintegration of the actin microfilament system. The gamma-secretase-mediated cleavage promotes disassembly of adherens junctions. During development of the cochlear organ of Corti, cleavage by ADAM10 at adherens junctions promotes pillar cell separation. N-glycosylation at Asn-637 is essential for expression, folding and trafficking. Addition of bisecting N-acetylglucosamine by MGAT3 modulates its cell membrane location. In terms of processing, ubiquitinated by a SCF complex containing SKP2, which requires prior phosphorylation by CK1/CSNK1A1. Ubiquitinated by CBLL1/HAKAI, requires prior phosphorylation at Tyr-754. Post-translationally, O-glycosylated. O-manosylated by TMTC1, TMTC2, TMTC3 or TMTC4. Thr-285 and Thr-509 are O-mannosylated by TMTC2 or TMTC4 but not TMTC1 or TMTC3.

It localises to the cell junction. Its subcellular location is the adherens junction. The protein resides in the cell membrane. It is found in the endosome. The protein localises to the golgi apparatus. It localises to the trans-Golgi network. Its subcellular location is the cytoplasm. The protein resides in the desmosome. Its function is as follows. Cadherins are calcium-dependent cell adhesion proteins. They preferentially interact with themselves in a homophilic manner in connecting cells; cadherins may thus contribute to the sorting of heterogeneous cell types. CDH1 is involved in mechanisms regulating cell-cell adhesions, mobility and proliferation of epithelial cells. Promotes organization of radial actin fiber structure and cellular response to contractile forces, via its interaction with AMOTL2 which facilitates anchoring of radial actin fibers to CDH1 junction complexes at the cell membrane. Plays a role in the early stages of desmosome cell-cell junction formation via facilitating the recruitment of DSG2 and DSP to desmosome plaques. Has a potent invasive suppressor role. It is a ligand for integrin alpha-E/beta-7. In terms of biological role, E-Cad/CTF2 promotes non-amyloidogenic degradation of Abeta precursors. Has a strong inhibitory effect on APP C99 and C83 production. This chain is Cadherin-1 (CDH1), found in Pongo abelii (Sumatran orangutan).